A 451-amino-acid polypeptide reads, in one-letter code: UBP1-associated protein 2B (451 aa).

Residues 1–86 (MTKKRKLESE…GNEDDDEEEP (86 aa)) form a disordered region. 2 stretches are compositionally biased toward basic and acidic residues: residues 25 to 38 (CEKE…VDNQ) and 49 to 63 (DTLK…KGED). The span at 67 to 77 (AETSSGSGNQG) shows a compositional bias: polar residues. 2 consecutive RRM domains span residues 128–236 (RKIF…NVSA) and 227–314 (RKIY…QHQH). 2 disordered regions span residues 302–335 (ANDG…GYGA) and 423–451 (GGYQ…YMGR). Gly residues predominate over residues 431–451 (GQGGAGRGQHGAGYGGPYMGR).

Expressed in shoot meristem and flowers.

It is found in the nucleus. Heterogeneous nuclear ribonucleoprotein (hnRNP)-like protein that acts as a component of a complex regulating the turnover of mRNAs in the nucleus. Binds with high affinity to RNA molecules that contain U-rich sequences in 3'-UTRs. May function in complex with UBP1 and contribute to the stabilization of mRNAs in the nucleus. The polypeptide is UBP1-associated protein 2B (UBA2B) (Arabidopsis thaliana (Mouse-ear cress)).